The primary structure comprises 74 residues: Small ribosomal subunit protein bS20c (74 aa).

Belongs to the bacterial ribosomal protein bS20 family.

The protein resides in the plastid. The protein localises to the chloroplast. Its function is as follows. Binds directly to 16S ribosomal RNA. The chain is Small ribosomal subunit protein bS20c from Cyanidioschyzon merolae (strain NIES-3377 / 10D) (Unicellular red alga).